The following is a 1065-amino-acid chain: Pumilio domain-containing protein P35G2.14 (1065 aa).

Disordered stretches follow at residues 1–78, 130–265, and 422–573; these read MHQD…SLRS, ITSK…PWSP, and TTGF…NTNS. Over residues 16 to 44 the composition is skewed to polar residues; the sequence is RNTISKPSNNNPPLDMSSLNNDFGQQLDS. Over residues 59-77 the composition is skewed to low complexity; the sequence is NPSSNFNDSNRSNISSSLR. Composition is skewed to polar residues over residues 134–151 and 169–189; these read LQNN…RGRT and SSVS…HFNP. 2 stretches are compositionally biased toward low complexity: residues 190-224 and 236-246; these read SSSS…SEII and SASNAANSGSN. Composition is skewed to polar residues over residues 247–262 and 434–455; these read TIRA…NTLP and GLNT…TFEV. T260 carries the post-translational modification Phosphothreonine. The segment covering 470 to 483 has biased composition (low complexity); sequence PLGSLSSRPKPSSS. Polar residues-rich tracts occupy residues 495–522 and 529–551; these read LKTS…SSSP and IHNQ…NGLR. S506, S511, and S515 each carry phosphoserine. T554 is subject to Phosphothreonine. Over residues 559–573 the composition is skewed to low complexity; the sequence is NISTRSSSESNNTNS. The region spanning 592–666 is the RRM domain; it reads HALWVGNLPS…DPVCISFAKV (75 aa). Positions 712–1065 constitute a PUM-HD domain; the sequence is DLSKIYQILN…ELKKLAEVCA (354 aa). Pumilio repeat units follow at residues 771–808, 809–844, 846–884, 886–917, 919–954, and 956–993; these read AINW…MMLE, RIAP…RLIA, HLQP…AILN, FWVI…VLVA, AITV…ILLT, and RFVQ…LVVD.

It localises to the cytoplasm. The chain is Pumilio domain-containing protein P35G2.14 from Schizosaccharomyces pombe (strain 972 / ATCC 24843) (Fission yeast).